We begin with the raw amino-acid sequence, 829 residues long: UBA domain-containing protein 8 (829 aa).

Positions 10 to 109 (EQQEFDRLLE…KQAKDDHHIK (100 aa)) constitute an EH 1 domain. The region spanning 43 to 78 (LPQKILAKIWDYCDQEDKGSLDRNQVYACFRLISQA) is the EF-hand 1 domain. The tract at residues 93-121 (GDPPILPKQAKDDHHIKRSSSETADFTPF) is disordered. Phosphoserine occurs at positions 112 and 113. EH domains lie at 129–225 (ERSE…AKSE) and 300–398 (DRSN…SDDT). In terms of domain architecture, EF-hand 2 spans 333–368 (LDSEELARIWDTVDTQDRGYIDKDEFAVAMEIIKLR). 2 stretches are compositionally biased toward polar residues: residues 466–506 (SFQD…TQSI) and 574–590 (TIPGSTSAALDDQQTTE). 3 disordered regions span residues 466–520 (SFQD…VNSS), 574–614 (TIPG…MRKL), and 724–785 (KPQV…QSYE). Positions 602–709 (EPTEEEQEEM…AKIDSIIADS (108 aa)) form a coiled coil. A compositionally biased stretch (pro residues) spans 728–737 (TPAPPTPAPT). Residues 764-774 (HANSSTPMNYV) show a composition bias toward polar residues. A compositionally biased stretch (low complexity) spans 775–785 (SQPESPPQSYE). The UBA domain maps to 788–828 (QNDNELLQELLSMGFPREKAVIALEATNYDVNEAANILLSS).

The protein is UBA domain-containing protein 8 (ucp8) of Schizosaccharomyces pombe (strain 972 / ATCC 24843) (Fission yeast).